The sequence spans 544 residues: uncharacterized protein (544 aa).

14 consecutive transmembrane segments (helical) span residues 31-51 (ILVF…AALA), 52-72 (GSVL…IGLL), 84-104 (LPWM…QWLI), 116-136 (WGLF…YTTV), 162-182 (FAFS…IAAG), 191-211 (FGEL…WSAL), 230-250 (LAPL…AKSF), 257-277 (GFDY…GFGF), 318-338 (FLFV…TASI), 356-376 (TIAL…QALA), 383-403 (VIYF…WLVQ), 407-427 (VALL…AYLI), 450-470 (FFYA…LFLV), and 501-521 (FAVA…AIFY).

The protein belongs to the sodium:galactoside symporter (TC 2.A.2) family.

The protein localises to the cell membrane. This is an uncharacterized protein from Synechocystis sp. (strain ATCC 27184 / PCC 6803 / Kazusa).